The primary structure comprises 332 residues: Probable endo-beta-1,4-glucanase B (332 aa).

Positions Met1 to Ala18 are cleaved as a signal peptide. Asn38 and Asn100 each carry an N-linked (GlcNAc...) asparagine glycan. Residue Glu160 is the Proton donor of the active site. An N-linked (GlcNAc...) asparagine glycan is attached at Asn212. Residue Glu267 is the Nucleophile of the active site. N-linked (GlcNAc...) asparagine glycosylation occurs at Asn289.

Belongs to the glycosyl hydrolase 5 (cellulase A) family.

It localises to the secreted. The enzyme catalyses Endohydrolysis of (1-&gt;4)-beta-D-glucosidic linkages in cellulose, lichenin and cereal beta-D-glucans.. In terms of biological role, has endoglucanase activity on substrates containing beta-1,4 glycosidic bonds, like in carboxymethylcellulose (CMC), hydroxyethylcellulose (HEC) and beta-glucan. Involved in the degradation of complex natural cellulosic substrates. In Aspergillus kawachii (strain NBRC 4308) (White koji mold), this protein is Probable endo-beta-1,4-glucanase B (eglB).